The primary structure comprises 60 residues: Large ribosomal subunit protein bL32 (60 aa).

The interval 1-23 is disordered; it reads MAVPKRKKSKSRRNMHRSHHAIK.

Belongs to the bacterial ribosomal protein bL32 family.

The chain is Large ribosomal subunit protein bL32 from Wolbachia pipientis subsp. Culex pipiens (strain wPip).